Here is a 1297-residue protein sequence, read N- to C-terminus: Phosphoribosylformylglycinamidine synthase (1297 aa).

ATP is bound by residues 307–318 (GASTGSGGEIRD) and alanine 678. Mg(2+)-binding residues include glutamate 718, asparagine 722, and aspartate 886. Positions 1044–1297 (MAILREQGVN…MFQNARKNLG (254 aa)) constitute a Glutamine amidotransferase type-1 domain. The active-site Nucleophile is cysteine 1137. Catalysis depends on residues histidine 1262 and glutamate 1264.

This sequence in the N-terminal section; belongs to the FGAMS family. Monomer.

It localises to the cytoplasm. It catalyses the reaction N(2)-formyl-N(1)-(5-phospho-beta-D-ribosyl)glycinamide + L-glutamine + ATP + H2O = 2-formamido-N(1)-(5-O-phospho-beta-D-ribosyl)acetamidine + L-glutamate + ADP + phosphate + H(+). The protein operates within purine metabolism; IMP biosynthesis via de novo pathway; 5-amino-1-(5-phospho-D-ribosyl)imidazole from N(2)-formyl-N(1)-(5-phospho-D-ribosyl)glycinamide: step 1/2. In terms of biological role, phosphoribosylformylglycinamidine synthase involved in the purines biosynthetic pathway. Catalyzes the ATP-dependent conversion of formylglycinamide ribonucleotide (FGAR) and glutamine to yield formylglycinamidine ribonucleotide (FGAM) and glutamate. The chain is Phosphoribosylformylglycinamidine synthase from Vibrio vulnificus (strain CMCP6).